The following is a 407-amino-acid chain: MELLEEDLTCPICCSLFDDPRVLPCSHNFCKKCLEGLLEGNVRNSLWRPSPFKCPTCRKETSATGVNSLQVNYSLKGIVEKYNKIKISPKMPVCKGHLGQPLNIFCVTDMQLICGICATRGEHTKHVFSSIEDAYAREKNAFESLFQSFETWRRGDALSRLDTLETNKRKALQLLTKDSDKVKEFFEKLQHTLDQKKNEILSDFETMKLAVMQTYDPEINKINTILQEQRMAFNIAEAFKDVSEPIIFLQQMQEFREKIKVIKETPLPHSNLPTSPLMKNFDTSQWGDIKLVDVDKLSLPQDTGVFTSKIPWYPYLLLMMVVLLGLLIFFGPTVFLEWSPLDELATWKDYLSSFNSYLTKSADFIEQSVFYWEQMTDGFFIFGERVKNVSLVALNNVAEFICKYKLL.

Residues 10–58 (CPICCSLFDDPRVLPCSHNFCKKCLEGLLEGNVRNSLWRPSPFKCPTCR) form an RING-type zinc finger. Residues 89–131 (PKMPVCKGHLGQPLNIFCVTDMQLICGICATRGEHTKHVFSSI) form a B box-type zinc finger. Zn(2+) contacts are provided by Cys-94, His-97, Cys-117, and His-123. A coiled-coil region spans residues 172–200 (LQLLTKDSDKVKEFFEKLQHTLDQKKNEI). The chain crosses the membrane as a helical span at residues 316-336 (LLLMMVVLLGLLIFFGPTVFL).

This sequence belongs to the TRIM/RBCC family. As to quaternary structure, interacts (via C-terminal domain) with VCP. Interacts with AKT1; the interaction ubiquitinates AKT1 and leads to its proteasomal degradation. Interacts with MDM2; the interaction ubiquitinates AKT1 and leads to its proteasomal degradation. Interacts with p62/SQSTM1. Interacts with TRAF6. Interacts with IKBKG/NEMO. Post-translationally, auto-ubiquitinated; requires the RING-type zinc finger. Auto-polyubiquitination leads to proteasomal degradation.

It localises to the endoplasmic reticulum membrane. The enzyme catalyses S-ubiquitinyl-[E2 ubiquitin-conjugating enzyme]-L-cysteine + [acceptor protein]-L-lysine = [E2 ubiquitin-conjugating enzyme]-L-cysteine + N(6)-ubiquitinyl-[acceptor protein]-L-lysine.. The protein operates within protein modification; protein ubiquitination. Endoplasmic reticulum (ER) membrane anchored E3 ligase involved in the retrotranslocation and turnover of membrane and secretory proteins from the ER through a set of processes named ER-associated degradation (ERAD). This process acts on misfolded proteins as well as in the regulated degradation of correctly folded proteins. Enhances ionizing radiation-induced p53/TP53 stability and apoptosis via ubiquitinating MDM2 and AKT1 and decreasing AKT1 kinase activity through MDM2 and AKT1 proteasomal degradation. Regulates ER stress-induced autophagy, and may act as a tumor suppressor. Also plays a role in innate immune response by stimulating NF-kappa-B activity in the TLR2 signaling pathway. Ubiquitinates TRAF6 via the 'Lys-29'-linked polyubiquitination chain resulting in NF-kappa-B activation. Participates as well in T-cell receptor-mediated NF-kappa-B activation. In the presence of TNF, modulates the IKK complex by regulating IKBKG/NEMO ubiquitination leading to the repression of NF-kappa-B. The polypeptide is E3 ubiquitin-protein ligase TRIM13 (Trim13) (Mus musculus (Mouse)).